The chain runs to 336 residues: Dihydroorotate dehydrogenase (quinone) (336 aa).

Residues 62–66 (AGLDK) and T86 each bind FMN. A substrate-binding site is contributed by K66. A substrate-binding site is contributed by 111–115 (NRMGF). Positions 139 and 172 each coordinate FMN. Residue N172 coordinates substrate. S175 acts as the Nucleophile in catalysis. A substrate-binding site is contributed by N177. FMN-binding residues include K217 and T245. 246–247 (NT) lines the substrate pocket. Residues G268, G297, and 318 to 319 (YS) contribute to the FMN site.

This sequence belongs to the dihydroorotate dehydrogenase family. Type 2 subfamily. In terms of assembly, monomer. Requires FMN as cofactor.

It localises to the cell membrane. It carries out the reaction (S)-dihydroorotate + a quinone = orotate + a quinol. It participates in pyrimidine metabolism; UMP biosynthesis via de novo pathway; orotate from (S)-dihydroorotate (quinone route): step 1/1. Catalyzes the conversion of dihydroorotate to orotate with quinone as electron acceptor. The chain is Dihydroorotate dehydrogenase (quinone) from Shigella dysenteriae serotype 1 (strain Sd197).